Consider the following 601-residue polypeptide: NAD-dependent malic enzyme 59 kDa isoform, mitochondrial (601 aa).

The N-terminal 18 residues, 1–18 (MWRVARSAASTFRRTRRL), are a transit peptide targeting the mitochondrion. The Proton donor role is filled by Tyr-129. Position 182 (Arg-182) interacts with NAD(+). Lys-200 (proton acceptor) is an active-site residue. Positions 271, 272, and 295 each coordinate a divalent metal cation. NAD(+)-binding residues include Asp-295 and Asn-444.

It belongs to the malic enzymes family. As to quaternary structure, heterodimer of two related subunits. It depends on Mg(2+) as a cofactor. The cofactor is Mn(2+).

It localises to the mitochondrion matrix. The enzyme catalyses (S)-malate + NAD(+) = pyruvate + CO2 + NADH. This is NAD-dependent malic enzyme 59 kDa isoform, mitochondrial from Solanum tuberosum (Potato).